The chain runs to 365 residues: Alanine racemase (365 aa).

Lys35 acts as the Proton acceptor; specific for D-alanine in catalysis. Position 35 is an N6-(pyridoxal phosphate)lysine (Lys35). Arg130 serves as a coordination point for substrate. Tyr256 (proton acceptor; specific for L-alanine) is an active-site residue. Residue Met304 coordinates substrate.

This sequence belongs to the alanine racemase family. Pyridoxal 5'-phosphate is required as a cofactor.

The enzyme catalyses L-alanine = D-alanine. It functions in the pathway amino-acid biosynthesis; D-alanine biosynthesis; D-alanine from L-alanine: step 1/1. Functionally, catalyzes the interconversion of L-alanine and D-alanine. May also act on other amino acids. The protein is Alanine racemase (alr) of Acidovorax ebreus (strain TPSY) (Diaphorobacter sp. (strain TPSY)).